A 392-amino-acid polypeptide reads, in one-letter code: Formate-dependent phosphoribosylglycinamide formyltransferase (392 aa).

Residues 22–23 (EL) and glutamate 82 contribute to the N(1)-(5-phospho-beta-D-ribosyl)glycinamide site. Residues arginine 114, lysine 155, 160-165 (SSGKGQ), 195-198 (EGVV), and glutamate 203 contribute to the ATP site. In terms of domain architecture, ATP-grasp spans 119–308 (RLAAEELGLP…EFALHVRAFL (190 aa)). Residues glutamate 267 and glutamate 279 each coordinate Mg(2+). N(1)-(5-phospho-beta-D-ribosyl)glycinamide-binding positions include aspartate 286, lysine 355, and 362-363 (RR).

This sequence belongs to the PurK/PurT family. Homodimer.

It catalyses the reaction N(1)-(5-phospho-beta-D-ribosyl)glycinamide + formate + ATP = N(2)-formyl-N(1)-(5-phospho-beta-D-ribosyl)glycinamide + ADP + phosphate + H(+). Its pathway is purine metabolism; IMP biosynthesis via de novo pathway; N(2)-formyl-N(1)-(5-phospho-D-ribosyl)glycinamide from N(1)-(5-phospho-D-ribosyl)glycinamide (formate route): step 1/1. Its function is as follows. Involved in the de novo purine biosynthesis. Catalyzes the transfer of formate to 5-phospho-ribosyl-glycinamide (GAR), producing 5-phospho-ribosyl-N-formylglycinamide (FGAR). Formate is provided by PurU via hydrolysis of 10-formyl-tetrahydrofolate. The sequence is that of Formate-dependent phosphoribosylglycinamide formyltransferase from Salmonella choleraesuis (strain SC-B67).